Here is a 186-residue protein sequence, read N- to C-terminus: Two-component response regulator ARR6 (186 aa).

The 128-residue stretch at 26–153 (HVLAVDDSHV…DVKRLRDSLM (128 aa)) folds into the Response regulatory domain. 4-aspartylphosphate is present on aspartate 86.

This sequence belongs to the ARR family. Type-A subfamily. Two-component system major event consists of a His-to-Asp phosphorelay between a sensor histidine kinase (HK) and a response regulator (RR). In plants, the His-to-Asp phosphorelay involves an additional intermediate named Histidine-containing phosphotransfer protein (HPt). This multistep phosphorelay consists of a His-Asp-His-Asp sequential transfer of a phosphate group between first a His and an Asp of the HK protein, followed by the transfer to a conserved His of the HPt protein and finally the transfer to an Asp in the receiver domain of the RR protein. Predominantly expressed in roots.

The protein localises to the nucleus. Its function is as follows. Functions as a response regulator involved in His-to-Asp phosphorelay signal transduction system. Phosphorylation of the Asp residue in the receiver domain activates the ability of the protein to promote the transcription of target genes. Type-A response regulators seem to act as negative regulators of the cytokinin signaling. The polypeptide is Two-component response regulator ARR6 (ARR6) (Arabidopsis thaliana (Mouse-ear cress)).